The primary structure comprises 384 residues: MEMMSSSSSTTQVVSFRDMGMYEPFQQLSGWESPFKSDINNITSNQNNNQSSSTTLEVDARPEADDNNRVNYTSVYNNSLEAEPSSNNDQDEDRINDKMKRRLAQNREAARKSRLRKKAHVQQLEESRLKLSQLEQELVRARQQGLCVRNSSDTSYLGPAGNMNSGIAAFEMEYTHWLEEQNRRVSEIRTALQAHIGDIELKMLVDSCLNHYANLFRMKADAAKADVFFLMSGMWRTSTERFFQWIGGFRPSELLNVVMPYVEPLTDQQLLEVRNLQQSSQQAEEALSQGLDKLQQGLVESIAIQIKVVESVNHGAPMASAMENLQALESFVNQADHLRQQTLQQMSKILTTRQAARGLLALGEYFHRLRALSSLWAARPREHT.

Disordered stretches follow at residues 36 to 70 (KSDINNITSNQNNNQSSSTTLEVDARPEADDNNRV) and 76 to 95 (YNNSLEAEPSSNNDQDEDRI). Low complexity predominate over residues 39 to 55 (INNITSNQNNNQSSSTT). Basic and acidic residues predominate over residues 58–68 (VDARPEADDNN). A compositionally biased stretch (polar residues) spans 76 to 88 (YNNSLEAEPSSNN). The 43-residue stretch at 96–138 (NDKMKRRLAQNREAARKSRLRKKAHVQQLEESRLKLSQLEQEL) folds into the bZIP domain. The tract at residues 98 to 118 (KMKRRLAQNREAARKSRLRKK) is basic motif. A Nuclear localization signal motif is present at residues 99–106 (MKRRLAQN). Residues 117-144 (KKAHVQQLEESRLKLSQLEQELVRARQQ) are a coiled coil. Residues 124–138 (LEESRLKLSQLEQEL) form a leucine-zipper region. The DOG1 domain maps to 167–379 (IAAFEMEYTH…RALSSLWAAR (213 aa)). Residues Lys219, Arg236, and Phe249 each coordinate hexadecanoate. A coiled-coil region spans residues 267–296 (DQQLLEVRNLQQSSQQAEEALSQGLDKLQQ).

This sequence belongs to the bZIP family. Binds DNA as a dimer. Interacts with NPR3, NPR4 and sumoylated NPR1. Interacts with GRXC7/ROXY1. In terms of tissue distribution, expressed in the whole plant.

It localises to the nucleus. Its function is as follows. Transcriptional activator that binds specifically to the DNA sequence 5'-TGACG-3'. Recognizes ocs elements like the as-1 motif of the cauliflower mosaic virus 35S promoter. Binding to the as-1-like cis elements mediate auxin- and salicylic acid-inducible transcription. Required to induce the systemic acquired resistance (SAR) via the regulation of pathogenesis-related genes expression. Binding to the as-1 element of PR-1 promoter is salicylic acid-inducible and mediated by sumoylated NPR1. Could also bind to the Hex-motif (5'-TGACGTGG-3') another cis-acting element found in plant histone promoters. The protein is Transcription factor TGA3 of Arabidopsis thaliana (Mouse-ear cress).